A 186-amino-acid chain; its full sequence is TATA-box-binding protein F (186 aa).

A run of 2 repeats spans residues 10 to 86 (IENV…FDDL) and 101 to 179 (VQNI…NDRL).

Belongs to the TBP family.

Functionally, general factor that plays a role in the activation of archaeal genes transcribed by RNA polymerase. Binds specifically to the TATA box promoter element which lies close to the position of transcription initiation. The chain is TATA-box-binding protein F (tbpF) from Halobacterium salinarum (strain ATCC 700922 / JCM 11081 / NRC-1) (Halobacterium halobium).